The chain runs to 575 residues: Muellerian-inhibiting factor (575 aa).

The N-terminal stretch at 1–24 (MPGPSLSLALVLSAMGALLRPGTP) is a signal peptide. Residues 25–466 (REEVFSTSAL…ERSGSARAQR (442 aa)) constitute a propeptide that is removed on maturation. 2 N-linked (GlcNAc...) asparagine glycosylation sites follow: Asn-78 and Asn-344. Disulfide bonds link Cys-477–Cys-541, Cys-503–Cys-572, and Cys-507–Cys-574.

Belongs to the TGF-beta family. As to quaternary structure, homodimer; disulfide-linked. Preproprotein is proteolytically processed to generate N- and C-terminal cleavage products that homodimerize and associate to form a biologically active non-covalent complex. Binding of the non-covalent complex to AMHR2 induces dissociation of the pro-region from the mature C-terminal dimer. The N-terminal portion of the protein, despite having no intrinsic activity, has the role of amplifying the activity of the C-terminus. In terms of tissue distribution, expressed in fetal testis and adult ovaries.

The protein resides in the secreted. Its function is as follows. Plays an important role in several reproductive functions. Induces Muellerian duct regression during male fetal sexual differentiation and plays a role in Leydig cell differentiation and function. In female acts as a negative regulator of the primordial to primary follicle transition and decreases FSH sensitivity of growing follicles. AMH signals by binding to a specific type-II receptor, AMHR2, that heterodimerizes with type-I receptors (ACVR1 and BMPR1A), and recruiting SMAD proteins that are translocated to the nucleus to regulate target gene expression. This Bos taurus (Bovine) protein is Muellerian-inhibiting factor (AMH).